We begin with the raw amino-acid sequence, 163 residues long: Transcription antitermination protein NusB (163 aa).

The protein belongs to the NusB family.

Functionally, involved in transcription antitermination. Required for transcription of ribosomal RNA (rRNA) genes. Binds specifically to the boxA antiterminator sequence of the ribosomal RNA (rrn) operons. The polypeptide is Transcription antitermination protein NusB (Mycolicibacterium vanbaalenii (strain DSM 7251 / JCM 13017 / BCRC 16820 / KCTC 9966 / NRRL B-24157 / PYR-1) (Mycobacterium vanbaalenii)).